The sequence spans 287 residues: Diaminopimelate epimerase (287 aa).

Substrate contacts are provided by asparagine 11, glutamine 44, and asparagine 64. The Proton donor role is filled by cysteine 73. Residues 74-75, asparagine 157, asparagine 190, and 208-209 contribute to the substrate site; these read GN and ER. Catalysis depends on cysteine 217, which acts as the Proton acceptor. 218-219 provides a ligand contact to substrate; the sequence is GT.

The protein belongs to the diaminopimelate epimerase family. As to quaternary structure, homodimer.

The protein localises to the cytoplasm. The enzyme catalyses (2S,6S)-2,6-diaminopimelate = meso-2,6-diaminopimelate. It functions in the pathway amino-acid biosynthesis; L-lysine biosynthesis via DAP pathway; DL-2,6-diaminopimelate from LL-2,6-diaminopimelate: step 1/1. Functionally, catalyzes the stereoinversion of LL-2,6-diaminopimelate (L,L-DAP) to meso-diaminopimelate (meso-DAP), a precursor of L-lysine and an essential component of the bacterial peptidoglycan. The chain is Diaminopimelate epimerase from Halorhodospira halophila (strain DSM 244 / SL1) (Ectothiorhodospira halophila (strain DSM 244 / SL1)).